Here is a 379-residue protein sequence, read N- to C-terminus: Protein RecA (379 aa).

Residues 1–24 (MSVDVKSAQSSKSDSLQAEPRPGE) are disordered. Residues 7–16 (SAQSSKSDSL) show a composition bias toward polar residues. ATP is bound at residue 84–91 (GPESSGKT).

It belongs to the RecA family.

The protein localises to the cytoplasm. Can catalyze the hydrolysis of ATP in the presence of single-stranded DNA, the ATP-dependent uptake of single-stranded DNA by duplex DNA, and the ATP-dependent hybridization of homologous single-stranded DNAs. It interacts with LexA causing its activation and leading to its autocatalytic cleavage. This is Protein RecA from Prochlorococcus marinus (strain MIT 9303).